Here is a 94-residue protein sequence, read N- to C-terminus: Small ribosomal subunit protein uS19 (94 aa).

This sequence belongs to the universal ribosomal protein uS19 family.

Its function is as follows. Protein S19 forms a complex with S13 that binds strongly to the 16S ribosomal RNA. This chain is Small ribosomal subunit protein uS19, found in Buchnera aphidicola subsp. Cinara cedri (strain Cc).